Reading from the N-terminus, the 402-residue chain is Probable 2,3-bisphosphoglycerate-independent phosphoglycerate mutase (402 aa).

Belongs to the BPG-independent phosphoglycerate mutase family. A-PGAM subfamily.

It catalyses the reaction (2R)-2-phosphoglycerate = (2R)-3-phosphoglycerate. It functions in the pathway carbohydrate degradation; glycolysis; pyruvate from D-glyceraldehyde 3-phosphate: step 3/5. Catalyzes the interconversion of 2-phosphoglycerate and 3-phosphoglycerate. This chain is Probable 2,3-bisphosphoglycerate-independent phosphoglycerate mutase, found in Thermosipho africanus (strain TCF52B).